We begin with the raw amino-acid sequence, 40 residues long: MADTTGRIPLWIIGTVTGLLVIGLIGIFFYGSYSGLGSSL.

Residues isoleucine 8 to phenylalanine 28 traverse the membrane as a helical segment.

Belongs to the PsbJ family. PSII is composed of 1 copy each of membrane proteins PsbA, PsbB, PsbC, PsbD, PsbE, PsbF, PsbH, PsbI, PsbJ, PsbK, PsbL, PsbM, PsbT, PsbX, PsbY, PsbZ, Psb30/Ycf12, at least 3 peripheral proteins of the oxygen-evolving complex and a large number of cofactors. It forms dimeric complexes.

It localises to the plastid. The protein resides in the chloroplast thylakoid membrane. Its function is as follows. One of the components of the core complex of photosystem II (PSII). PSII is a light-driven water:plastoquinone oxidoreductase that uses light energy to abstract electrons from H(2)O, generating O(2) and a proton gradient subsequently used for ATP formation. It consists of a core antenna complex that captures photons, and an electron transfer chain that converts photonic excitation into a charge separation. In Ipomoea purpurea (Common morning glory), this protein is Photosystem II reaction center protein J.